The following is a 245-amino-acid chain: Orotidine 5'-phosphate decarboxylase (245 aa).

Residues Asp-22, Lys-44, 71-80, Thr-131, Arg-192, Gln-201, Gly-221, and Arg-222 contribute to the substrate site; that span reads DLKFHDIPNT. The active-site Proton donor is Lys-73.

The protein belongs to the OMP decarboxylase family. Type 1 subfamily. Homodimer.

It carries out the reaction orotidine 5'-phosphate + H(+) = UMP + CO2. The protein operates within pyrimidine metabolism; UMP biosynthesis via de novo pathway; UMP from orotate: step 2/2. Functionally, catalyzes the decarboxylation of orotidine 5'-monophosphate (OMP) to uridine 5'-monophosphate (UMP). The protein is Orotidine 5'-phosphate decarboxylase of Escherichia coli (strain K12 / MC4100 / BW2952).